The sequence spans 902 residues: Translation initiation factor IF-2 (902 aa).

2 stretches are compositionally biased toward basic and acidic residues: residues 1-12 and 43-60; these read MVDTKTPGDKKL and VVEK…EPHA. Positions 1 to 276 are disordered; sequence MVDTKTPGDK…KPGPQKERGR (276 aa). Residues 69–84 are compositionally biased toward pro residues; that stretch reads PAAPAPSRPAPPPAPP. A compositionally biased stretch (basic and acidic residues) spans 111–174; the sequence is AKLREVEERR…ETEAKKRFGE (64 aa). Low complexity-rich tracts occupy residues 181 to 190 and 198 to 237; these read AARPATAAPA and APAA…AVAA. A tr-type G domain is found at 398 to 567; that stretch reads TRSPVVTVMG…MIALQADILD (170 aa). The G1 stretch occupies residues 407-414; the sequence is GHVDHGKT. 407–414 provides a ligand contact to GTP; it reads GHVDHGKT. The segment at 432-436 is G2; sequence GITQH. The G3 stretch occupies residues 455–458; sequence DTPG. Residues 455-459 and 509-512 each bind GTP; these read DTPGH and NKID. Positions 509 to 512 are G4; that stretch reads NKID. The tract at residues 545-547 is G5; the sequence is SAK.

It belongs to the TRAFAC class translation factor GTPase superfamily. Classic translation factor GTPase family. IF-2 subfamily.

It localises to the cytoplasm. In terms of biological role, one of the essential components for the initiation of protein synthesis. Protects formylmethionyl-tRNA from spontaneous hydrolysis and promotes its binding to the 30S ribosomal subunits. Also involved in the hydrolysis of GTP during the formation of the 70S ribosomal complex. The polypeptide is Translation initiation factor IF-2 (Bradyrhizobium diazoefficiens (strain JCM 10833 / BCRC 13528 / IAM 13628 / NBRC 14792 / USDA 110)).